The chain runs to 192 residues: Putative acetyltransferase SH0499 (192 aa).

It belongs to the transferase hexapeptide repeat family.

The polypeptide is Putative acetyltransferase SH0499 (Staphylococcus haemolyticus (strain JCSC1435)).